The chain runs to 415 residues: Gamma-glutamyl phosphate reductase (415 aa).

Belongs to the gamma-glutamyl phosphate reductase family.

It localises to the cytoplasm. The catalysed reaction is L-glutamate 5-semialdehyde + phosphate + NADP(+) = L-glutamyl 5-phosphate + NADPH + H(+). Its pathway is amino-acid biosynthesis; L-proline biosynthesis; L-glutamate 5-semialdehyde from L-glutamate: step 2/2. Catalyzes the NADPH-dependent reduction of L-glutamate 5-phosphate into L-glutamate 5-semialdehyde and phosphate. The product spontaneously undergoes cyclization to form 1-pyrroline-5-carboxylate. The protein is Gamma-glutamyl phosphate reductase of Leuconostoc citreum (strain KM20).